The chain runs to 70 residues: Protein SlyX homolog (70 aa).

It belongs to the SlyX family.

This Shewanella baltica (strain OS155 / ATCC BAA-1091) protein is Protein SlyX homolog.